The chain runs to 79 residues: UPF0154 protein SSP1415 (79 aa).

Residues 4–24 (WLAIVLIVLALILGLVGGFFL) traverse the membrane as a helical segment.

Belongs to the UPF0154 family.

The protein localises to the membrane. The polypeptide is UPF0154 protein SSP1415 (Staphylococcus saprophyticus subsp. saprophyticus (strain ATCC 15305 / DSM 20229 / NCIMB 8711 / NCTC 7292 / S-41)).